Consider the following 271-residue polypeptide: Ribosomal RNA small subunit methyltransferase A (271 aa).

S-adenosyl-L-methionine-binding residues include asparagine 19, leucine 21, glycine 46, glutamate 67, aspartate 92, and asparagine 113.

Belongs to the class I-like SAM-binding methyltransferase superfamily. rRNA adenine N(6)-methyltransferase family. RsmA subfamily.

The protein localises to the cytoplasm. It carries out the reaction adenosine(1518)/adenosine(1519) in 16S rRNA + 4 S-adenosyl-L-methionine = N(6)-dimethyladenosine(1518)/N(6)-dimethyladenosine(1519) in 16S rRNA + 4 S-adenosyl-L-homocysteine + 4 H(+). Functionally, specifically dimethylates two adjacent adenosines (A1518 and A1519) in the loop of a conserved hairpin near the 3'-end of 16S rRNA in the 30S particle. May play a critical role in biogenesis of 30S subunits. The sequence is that of Ribosomal RNA small subunit methyltransferase A from Photobacterium profundum (strain SS9).